The sequence spans 141 residues: Large ribosomal subunit protein uL11 (141 aa).

It belongs to the universal ribosomal protein uL11 family. As to quaternary structure, part of the ribosomal stalk of the 50S ribosomal subunit. Interacts with L10 and the large rRNA to form the base of the stalk. L10 forms an elongated spine to which L12 dimers bind in a sequential fashion forming a multimeric L10(L12)X complex. Post-translationally, one or more lysine residues are methylated.

Forms part of the ribosomal stalk which helps the ribosome interact with GTP-bound translation factors. This chain is Large ribosomal subunit protein uL11, found in Thermotoga sp. (strain RQ2).